A 709-amino-acid polypeptide reads, in one-letter code: MELSSVLPCKRCTPWRGLLLTASLLTCWLLPTTAQVSIESLPPQVVEGENVLLHVDNLPENLIAFVWYKGLTNMSLGVALYSLTYNVTVTGPVHSGRETLYSNGSLWIQNVTQKDTGFYTLRTISNHGEIVSNTSLHLHVYFSTLTCGRAATSAQLSIESVPTSISKGESALLLAHNLPENLRAIFWYKGAIVFKDLEVARYVIGTNSSVPGPAHSGRETMYSNGSLLLQNVTRNDAGFYTLKTLSTDLKTEIAYVQLQVDTCFMSYAGPPTSAQLTVESAPTSVAEGASVLLLVHNLPENLRAIFWYKGVILFKDLEVARYVIGTNSSVLGPAHSGRETMYSNGSLLLQNVTRNDAGFYTLRTLSTDLKAKVVHVQLQVNTSSCCDPLTPALLTIDPVPRHAAKGESVLLQVRNLPEDLRMFIWFKSVYTSQIFKIAEYSRAINYVFRGPAHSGRETVYTNGSLLLQDATEKDTGLYTLQIIYRNFKIETAHVQVSVHTCVHPSTTGQLVIESVPPNVVEGGDVLLLVHNMPENLQSFSWYKGVAIVNRHEISRNIIASNRSTLGPAHSGRETIYSNGSLLLHNATEEDNGLYTLWTVNRHSETQGIHVHIHIYKPVAQPFIRVTESSVRVKSSVVLTCLSADTGTSIQWLFNNQNLRLTQRMSLSQTKCQLSIDPVRREDAGEYRCEVSNPVSSKTSLPVSLDVIIE.

Positions 1 to 34 are cleaved as a signal peptide; it reads MELSSVLPCKRCTPWRGLLLTASLLTCWLLPTTA. 5 consecutive Ig-like V-type domains span residues 35–142, 155–262, 275–382, 393–500, and 509–616; these read QVSI…HVYF, QLSI…QVDT, QLTV…QVNT, LLTI…SVHT, and QLVI…HIYK. N-linked (GlcNAc...) asparagine glycosylation is found at N73, N86, N103, N110, N133, N207, N224, N231, N327, N344, N351, N381, N462, N561, N578, and N585. The Ig-like C2-type domain occupies 631–695; that stretch reads RVKSSVVLTC…YRCEVSNPVS (65 aa).

Belongs to the immunoglobulin superfamily. CEA family. As to expression, expression detected only in placenta.

Possibly involved in cell adhesion. The polypeptide is Cell adhesion molecule CEACAM3 (Rattus norvegicus (Rat)).